The chain runs to 597 residues: Nuclear factor erythroid 2-related factor 2 (597 aa).

A DLG motif motif is present at residues 29–31 (DLG). A Phosphoserine; by PKC modification is found at Ser-40. Residues 79-82 (ETGE) carry the ETGE motif motif. At Ser-207 the chain carries Phosphoserine. Positions 327–440 (TMEFNDSDSG…APFTKDKHSS (114 aa)) are disordered. Residues 333–345 (SDSGISLNTSPSR) are compositionally biased toward polar residues. Residues Lys-454, Lys-464, and Lys-479 are each glycosylated (N-linked (Glc) (glycation) lysine). A bZIP domain is found at 489–552 (LIRDIRRRGK…HLLKRRLSTL (64 aa)). The N-linked (Glc) (glycation) arginine glycan is linked to Arg-491. The segment at 491–510 (RDIRRRGKNKVAAQNCRKRK) is basic motif. The segment at 514-521 (IVELEQDL) is leucine-zipper. N-linked (Glc) (glycation) arginine glycosylation is present at Arg-561. Residues 563–597 (EDGKPYSPSEYSLQQTRDGNVFLVPKSKKPDTKKN) are disordered. Lys-566 is a glycosylation site (N-linked (Glc) (glycation) lysine). Positions 571–580 (SEYSLQQTRD) are enriched in polar residues. The mediates interaction with CHD6 and is necessary to activate transcription stretch occupies residues 583–588 (VFLVPK). Lys-588 and Lys-591 each carry N6-acetyllysine; by CREBBP.

This sequence belongs to the bZIP family. CNC subfamily. Heterodimer; heterodimerizes with small Maf proteins. Interacts (via the bZIP domain) with MAFG and MAFK; required for binding to antioxidant response elements (AREs) on DNA. Interacts with KEAP1; the interaction is direct and promotes ubiquitination by the BCR(KEAP1) E3 ubiquitin ligase complex. Forms a ternary complex with PGAM5 and KEAP1. Interacts with EEF1D at heat shock promoter elements (HSE). Interacts via its leucine-zipper domain with the coiled-coil domain of PMF1. Interacts with CHD6; involved in activation of the transcription. Interacts with ESRRB; represses NFE2L2 transcriptional activity. Interacts with MOTS-c, a peptide produced by the mitochondrially encoded 12S rRNA MT-RNR1; the interaction occurs in the nucleus following metabolic stress. Post-translationally, ubiquitinated in the cytoplasm by the BCR(KEAP1) E3 ubiquitin ligase complex leading to its degradation. In response to oxidative stress, electrophile metabolites, such as sulforaphane, modify KEAP1, leading to inhibit activity of the BCR(KEAP1) complex, promoting NFE2L2/NRF2 nuclear accumulation and activity. In response to autophagy, the BCR(KEAP1) complex is inactivated. Phosphorylated by EIF2AK3/PERK following unfolded protein response (UPR), promoting dissociation from its cytoplasmic inhibitor KEAP1, followed by its translocation into the nucleus. Phosphorylation of Ser-40 by PKC in response to oxidative stress dissociates NFE2L2 from its cytoplasmic inhibitor KEAP1, promoting its translocation into the nucleus. In terms of processing, acetylation at Lys-588 and Lys-591 increases nuclear localization whereas deacetylation by SIRT1 enhances cytoplasmic presence. Post-translationally, glycation impairs transcription factor activity by preventing heterodimerization with small Maf proteins. Deglycation by FN3K restores activity. Widely expressed. Highest expression in liver, skeletal muscle, luminal cells of the stomach and intestine, lining of the bronchi and alveoli, and in renal tubules; followed by heart, spleen, testis and brain.

It is found in the cytoplasm. The protein resides in the cytosol. It localises to the nucleus. Functionally, transcription factor that plays a key role in the response to oxidative stress: binds to antioxidant response (ARE) elements present in the promoter region of many cytoprotective genes, such as phase 2 detoxifying enzymes, and promotes their expression, thereby neutralizing reactive electrophiles. In normal conditions, ubiquitinated and degraded in the cytoplasm by the BCR(KEAP1) complex. In response to oxidative stress, electrophile metabolites inhibit activity of the BCR(KEAP1) complex, promoting nuclear accumulation of NFE2L2/NRF2, heterodimerization with one of the small Maf proteins and binding to ARE elements of cytoprotective target genes. The NFE2L2/NRF2 pathway is also activated in response to selective autophagy: autophagy promotes interaction between KEAP1 and SQSTM1/p62 and subsequent inactivation of the BCR(KEAP1) complex, leading to NFE2L2/NRF2 nuclear accumulation and expression of cytoprotective genes. The NFE2L2/NRF2 pathway is also activated during the unfolded protein response (UPR), contributing to redox homeostasis and cell survival following endoplasmic reticulum stress. May also be involved in the transcriptional activation of genes of the beta-globin cluster by mediating enhancer activity of hypersensitive site 2 of the beta-globin locus control region. Also plays an important role in the regulation of the innate immune response. It is a critical regulator of the innate immune response and survival during sepsis by maintaining redox homeostasis and restraint of the dysregulation of pro-inflammatory signaling pathways like MyD88-dependent and -independent and TNF-alpha signaling. Suppresses macrophage inflammatory response by blocking pro-inflammatory cytokine transcription and the induction of IL6. Binds to the proximity of pro-inflammatory genes in macrophages and inhibits RNA Pol II recruitment. The inhibition is independent of the Nrf2-binding motif and reactive oxygen species level. Represses antiviral cytosolic DNA sensing by suppressing the expression of the adapter protein STING1 and decreasing responsiveness to STING1 agonists while increasing susceptibility to infection with DNA viruses. The sequence is that of Nuclear factor erythroid 2-related factor 2 from Mus musculus (Mouse).